The chain runs to 359 residues: MQTTIQQRSGASAWQQFCEWVTSTDNRLYVGWFGVLMIPTLLAATTCFIVAFIAAPPVDIDGIREPVAGSLLYGNNIISGAVVPSSNAIGLHFYPIWEAASLDEWLYNGGPFQLVIFHFLIGIYAYMGREWELSYRLGMRPWICIAYSAPVAAASAVFLVYPFGQGSFSDAMPLGISGTFNYMLVFQAEHNILMHPFHMLGVAGVFGGSLFSAMHGSLVTSSLVRETTESESQNYGYKFGQEEETYNIVAAHGYFGRLIFQYASFNNSRSLHFFLAAWPVVGIWFTALGVSTMAFNLNGFNFNQSILDSQGRVLNTWADILNRAGLGMEVMHERNAHNFPLDLAAAESAPVALQAPAIG.

3 helical membrane-spanning segments follow: residues 29-46, 118-133, and 142-156; these read YVGW…AATT, HFLI…EWEL, and WICI…AASA. His-118 is a chlorophyll a binding site. Tyr-126 is a binding site for pheophytin a. The [CaMn4O5] cluster site is built by Asp-170 and Glu-189. The chain crosses the membrane as a helical span at residues 197–218; the sequence is FHMLGVAGVFGGSLFSAMHGSL. His-198 contributes to the chlorophyll a binding site. A quinone is bound by residues His-215 and 264–265; that span reads SF. His-215 serves as a coordination point for Fe cation. His-272 is a Fe cation binding site. A helical membrane pass occupies residues 274–288; it reads FLAAWPVVGIWFTAL. His-332, Glu-333, Asp-342, and Ala-344 together coordinate [CaMn4O5] cluster. Positions 345–359 are excised as a propeptide; the sequence is AAESAPVALQAPAIG.

The protein belongs to the reaction center PufL/M/PsbA/D family. In terms of assembly, PSII is composed of 1 copy each of membrane proteins PsbA, PsbB, PsbC, PsbD, PsbE, PsbF, PsbH, PsbI, PsbJ, PsbK, PsbL, PsbM, PsbT, PsbX, PsbY, PsbZ, Psb30/Ycf12, peripheral proteins PsbO, CyanoQ (PsbQ), PsbU, PsbV and a large number of cofactors. It forms dimeric complexes. Requires The D1/D2 heterodimer binds P680, chlorophylls that are the primary electron donor of PSII, and subsequent electron acceptors. It shares a non-heme iron and each subunit binds pheophytin, quinone, additional chlorophylls, carotenoids and lipids. D1 provides most of the ligands for the Mn4-Ca-O5 cluster of the oxygen-evolving complex (OEC). There is also a Cl(-1) ion associated with D1 and D2, which is required for oxygen evolution. The PSII complex binds additional chlorophylls, carotenoids and specific lipids. as cofactor. Tyr-161 forms a radical intermediate that is referred to as redox-active TyrZ, YZ or Y-Z. Post-translationally, C-terminally processed by CtpA; processing is essential to allow assembly of the oxygen-evolving complex and thus photosynthetic growth.

The protein localises to the cellular thylakoid membrane. It catalyses the reaction 2 a plastoquinone + 4 hnu + 2 H2O = 2 a plastoquinol + O2. In terms of biological role, photosystem II (PSII) is a light-driven water:plastoquinone oxidoreductase that uses light energy to abstract electrons from H(2)O, generating O(2) and a proton gradient subsequently used for ATP formation. It consists of a core antenna complex that captures photons, and an electron transfer chain that converts photonic excitation into a charge separation. The D1/D2 (PsbA/PsbD) reaction center heterodimer binds P680, the primary electron donor of PSII as well as several subsequent electron acceptors. The chain is Photosystem II protein D1 1 from Synechococcus sp. (strain RCC307).